The chain runs to 585 residues: YTH domain-containing family protein 3 (585 aa).

3 disordered regions span residues 1-51, 244-277, and 304-350; these read MSAT…SYPP, KPAK…MNIG, and PQPL…QPQL. Ser-2 bears the N-acetylserine mark. Residues 15 to 24 are compositionally biased toward polar residues; that stretch reads NKVSVQNGSI. At Ser-23 the chain carries Phosphoserine. A compositionally biased stretch (basic residues) spans 244-254; sequence KPAKPQPKLKP. A compositionally biased stretch (low complexity) spans 329–350; sequence QQQQGPQPQAQPHQVQSQQPQL. In terms of domain architecture, YTH spans 416 to 550; it reads GRVFIIKSYS…EKAKQVLKII (135 aa). RNA-binding positions include 422-424, Asp-428, 438-439, Asn-468, Trp-492, and Trp-497; these read KSY and WC.

The protein belongs to the YTHDF family. YTHDF3 subfamily. As to quaternary structure, interacts with CNOT1; promoting recruitment of the CCR4-NOT complex. Interacts with YTHDF1. Interacts with YTHDF2. Interacts with PAN3.

The protein resides in the cytoplasm. It is found in the cytosol. Its subcellular location is the P-body. It localises to the stress granule. Specifically recognizes and binds N6-methyladenosine (m6A)-containing RNAs, and regulates their stability. M6A is a modification present at internal sites of mRNAs and some non-coding RNAs and plays a role in mRNA stability and processing. Acts as a regulator of mRNA stability by promoting degradation of m6A-containing mRNAs via interaction with the CCR4-NOT complex or PAN3. The YTHDF paralogs (YTHDF1, YTHDF2 and YTHDF3) share m6A-containing mRNAs targets and act redundantly to mediate mRNA degradation and cellular differentiation. Acts as a negative regulator of type I interferon response by down-regulating interferon-stimulated genes (ISGs) expression: acts by binding to FOXO3 mRNAs. Binds to FOXO3 mRNAs independently of METTL3-mediated m6A modification. Can also act as a regulator of mRNA stability in cooperation with YTHDF2 by binding to m6A-containing mRNA and promoting their degradation. Recognizes and binds m6A-containing circular RNAs (circRNAs); circRNAs are generated through back-splicing of pre-mRNAs, a non-canonical splicing process promoted by dsRNA structures across circularizing exons. Promotes formation of phase-separated membraneless compartments, such as P-bodies or stress granules, by undergoing liquid-liquid phase separation upon binding to mRNAs containing multiple m6A-modified residues: polymethylated mRNAs act as a multivalent scaffold for the binding of YTHDF proteins, juxtaposing their disordered regions and thereby leading to phase separation. The resulting mRNA-YTHDF complexes then partition into different endogenous phase-separated membraneless compartments, such as P-bodies, stress granules or neuronal RNA granules. May also recognize and bind N1-methyladenosine (m1A)-containing mRNAs: inhibits trophoblast invasion by binding to m1A-methylated transcripts of IGF1R, promoting their degradation. This chain is YTH domain-containing family protein 3, found in Mus musculus (Mouse).